The chain runs to 728 residues: Rho-related BTB domain-containing protein 2 (728 aa).

The interval M1–S210 is rho-like. GTP-binding positions include G21–T28, D84–D88, and C140–D143. 2 consecutive BTB domains span residues A266 to H333 and S500 to P567. Gly residues predominate over residues E304–G313. A disordered region spans residues E304–H333. Basic and acidic residues predominate over residues R315 to E324. Residues F703–V728 are disordered. A compositionally biased stretch (low complexity) spans S706–V728.

This sequence belongs to the small GTPase superfamily. Rho family. In terms of assembly, interacts with HSP90AA1 and HSP90AB1. Forms a complex with CUL3 and RBX1. Interacts (via BTB 1 domain) with CUL3. Interacts with MSI2. Autoubiquitinated by RHOBTB2-CUL3-RBX1 ubiquitin ligase complex. As to expression, expressed in most tissues, with highest expression in brain.

Its function is as follows. Regulator of cell proliferation and apoptosis. It likely functions as a substrate-adapter that recruits key substrates, e.g. MSI2, to CUL3-based ubiquitin ligase complexes for degradation. Required for MSI2 ubiquitination and degradation. In Mus musculus (Mouse), this protein is Rho-related BTB domain-containing protein 2 (Rhobtb2).